Consider the following 302-residue polypeptide: Probable alpha-L-glutamate ligase (302 aa).

One can recognise an ATP-grasp domain in the interval 112–294 (LQLLLKAGIP…IAAEIIDYIE (183 aa)). ATP is bound by residues Lys148, 185–186 (DF), Asp194, and 218–220 (RAN). Positions 255, 267, and 269 each coordinate Mg(2+). Residues Asp255, Glu267, and Asn269 each contribute to the Mn(2+) site.

This sequence belongs to the RimK family. Requires Mg(2+) as cofactor. Mn(2+) serves as cofactor.

This Haemophilus influenzae (strain ATCC 51907 / DSM 11121 / KW20 / Rd) protein is Probable alpha-L-glutamate ligase.